Here is a 267-residue protein sequence, read N- to C-terminus: Phosphonates import ATP-binding protein PhnC 2 (267 aa).

Residues 3–247 enclose the ABC transporter domain; that stretch reads LSLDGVDLVH…ALDALYANEQ (245 aa). 36 to 43 contributes to the ATP binding site; sequence GPSGAGKT.

Belongs to the ABC transporter superfamily. Phosphonates importer (TC 3.A.1.9.1) family. The complex is composed of two ATP-binding proteins (PhnC), two transmembrane proteins (PhnE) and a solute-binding protein (PhnD).

The protein localises to the cell inner membrane. It catalyses the reaction phosphonate(out) + ATP + H2O = phosphonate(in) + ADP + phosphate + H(+). Functionally, part of the ABC transporter complex PhnCDE involved in phosphonates import. Responsible for energy coupling to the transport system. The polypeptide is Phosphonates import ATP-binding protein PhnC 2 (Pseudomonas aeruginosa (strain UCBPP-PA14)).